The following is a 201-amino-acid chain: Ribosome maturation factor RimM (201 aa).

The PRC barrel domain maps to 92–166 (DEDEFYHADL…RVVVEPPANF (75 aa)). Residues 169–201 (PAGPQPAEGEEMPDGALEALEGEEAGAGTAPQP) form a disordered region.

This sequence belongs to the RimM family. As to quaternary structure, binds ribosomal protein uS19.

It is found in the cytoplasm. In terms of biological role, an accessory protein needed during the final step in the assembly of 30S ribosomal subunit, possibly for assembly of the head region. Essential for efficient processing of 16S rRNA. May be needed both before and after RbfA during the maturation of 16S rRNA. It has affinity for free ribosomal 30S subunits but not for 70S ribosomes. The protein is Ribosome maturation factor RimM of Rhodospirillum centenum (strain ATCC 51521 / SW).